Here is a 329-residue protein sequence, read N- to C-terminus: Trem-like transcript 2 protein (329 aa).

Residues 1-24 (MEPWPLTFLLLLLLLLWLQGCVSG) form the signal peptide. The region spanning 25–126 (HSNENLYRKV…HFYPLVGFQL (102 aa)) is the Ig-like V-type domain. The Extracellular portion of the chain corresponds to 25–270 (HSNENLYRKV…NRSQETYIPA (246 aa)). 2 disulfide bridges follow: cysteine 46-cysteine 110 and cysteine 61-cysteine 68. Residues 202-259 (FIDTSGTVTEPERNTESQPATLSPSNARSFSADPVTTSTMSRHQSSSLSTTGTCHPLT) are disordered. Residues 217–259 (ESQPATLSPSNARSFSADPVTTSTMSRHQSSSLSTTGTCHPLT) show a composition bias toward polar residues. The N-linked (GlcNAc...) asparagine glycan is linked to asparagine 261. The helical transmembrane segment at 271-291 (MVVVLTFLPAPVVLVVAYGFW) threads the bilayer. The Cytoplasmic portion of the chain corresponds to 292–329 (KKRHMGRYNLGSNYAKPWIHLPEGPETPWKPAWSKITQ).

Interacts with CD276 and this interaction enhances T-cell activation. As to expression, detected in B-lymphocytes and macrophages. Detected in spleen, lymph nodes, blood, bone marrow and cells from the peritoneal cavity (at protein level).

It is found in the cell membrane. Functionally, cell surface receptor that may play a role in the innate and adaptive immune response. Acts as a counter-receptor for CD276 and interaction with CD276 on T-cells enhances T-cell activation. The protein is Trem-like transcript 2 protein (Treml2) of Mus musculus (Mouse).